A 380-amino-acid chain; its full sequence is Protein Wnt-5a (380 aa).

The N-terminal stretch at 1-35 (MKKSIGILSPGVALGTAGSAMSSKFFVMALAVFFS) is a signal peptide. Positions 36 to 61 (FAQVVIEANSWWSLGMNNPVQMSEVY) are excised as a propeptide. Cys104 and Cys115 are oxidised to a cystine. N-linked (GlcNAc...) asparagine glycans are attached at residues Asn114 and Asn120. Disulfide bonds link Cys154–Cys162, Cys164–Cys182, Cys238–Cys252, Cys240–Cys247, Cys309–Cys340, Cys325–Cys335, Cys339–Cys379, Cys355–Cys370, Cys357–Cys367, and Cys362–Cys363. Residue Ser244 is the site of O-palmitoleoyl serine; by PORCN attachment. Asn312 and Asn326 each carry an N-linked (GlcNAc...) asparagine glycan.

The protein belongs to the Wnt family. Forms a soluble 1:1 complex with AFM; this prevents oligomerization and is required for prolonged biological activity. The complex with AFM may represent the physiological form in body fluids. Homooligomer; disulfide-linked, leading to inactivation (in vitro). Interacts with PORCN. Interacts with WLS. Interacts with glypican GCP3. Interacts with PKD1 (via extracellular domain). Interacts with TMEM67. In terms of processing, glycosylation is necessary for secretion but not for activity. Palmitoleoylation is required for efficient binding to frizzled receptors. Depalmitoleoylation leads to Wnt signaling pathway inhibition. Post-translationally, proteolytic processing by TIKI1 and TIKI2 promotes oxidation and formation of large disulfide-bond oligomers, leading to inactivation of WNT5A.

The protein resides in the secreted. It localises to the extracellular space. The protein localises to the extracellular matrix. Its function is as follows. Ligand for members of the frizzled family of seven transmembrane receptors. Can activate or inhibit canonical Wnt signaling, depending on receptor context. In the presence of FZD4, activates beta-catenin signaling. In the presence of ROR2, inhibits the canonical Wnt pathway by promoting beta-catenin degradation through a GSK3-independent pathway which involves down-regulation of beta-catenin-induced reporter gene expression. Suppression of the canonical pathway allows chondrogenesis to occur. Inhibits tumor formation. Stimulates cell migration. Decreases proliferation, migration, invasiveness and clonogenicity of carcinoma cells and may act as a tumor suppressor. Mediates motility of melanoma cells. Required during embryogenesis for extension of the primary anterior-posterior axis and for outgrowth of limbs and the genital tubercle. Inhibits type II collagen expression in chondrocytes. This chain is Protein Wnt-5a, found in Oryctolagus cuniculus (Rabbit).